The following is a 353-amino-acid chain: uncharacterized protein (353 aa).

An N-terminal signal peptide occupies residues 1–28; that stretch reads MHLTIMRRFAVLLLLAIFLGGCSGSNGA.

This is an uncharacterized protein from Archaeoglobus fulgidus (strain ATCC 49558 / DSM 4304 / JCM 9628 / NBRC 100126 / VC-16).